We begin with the raw amino-acid sequence, 367 residues long: DNA replication and repair protein RecF (367 aa).

30–37 (GANGSGKT) is an ATP binding site.

Belongs to the RecF family.

It localises to the cytoplasm. Functionally, the RecF protein is involved in DNA metabolism; it is required for DNA replication and normal SOS inducibility. RecF binds preferentially to single-stranded, linear DNA. It also seems to bind ATP. In Pseudomonas savastanoi pv. phaseolicola (strain 1448A / Race 6) (Pseudomonas syringae pv. phaseolicola (strain 1448A / Race 6)), this protein is DNA replication and repair protein RecF.